A 37-amino-acid chain; its full sequence is Cytochrome b6-f complex subunit 5 (37 aa).

Residues 5–25 form a helical membrane-spanning segment; the sequence is LLSGIVLGLMPVTLAGLFTTA.

The protein belongs to the PetG family. In terms of assembly, the 4 large subunits of the cytochrome b6-f complex are cytochrome b6, subunit IV (17 kDa polypeptide, PetD), cytochrome f and the Rieske protein, while the 4 small subunits are PetG, PetL, PetM and PetN. The complex functions as a dimer.

It localises to the plastid. It is found in the chloroplast thylakoid membrane. Its function is as follows. Component of the cytochrome b6-f complex, which mediates electron transfer between photosystem II (PSII) and photosystem I (PSI), cyclic electron flow around PSI, and state transitions. PetG is required for either the stability or assembly of the cytochrome b6-f complex. The chain is Cytochrome b6-f complex subunit 5 from Ostreococcus tauri.